We begin with the raw amino-acid sequence, 673 residues long: MSKPFKLNSAFKPSGDQPDAIRRLEEGLEDGLAHQTLLGVTGSGKTFTIANVIADLQRPTMVLAPNKTLAAQLYGEMKEFFPENAVEYFVSYYDYYQPEAYVPSSDTFIEKDASVNEHIEQMRLSATKALLERRDVVVVASVSAIYGLGDPDLYLKMMLHLTVGMLIDQRAILRRLAELQYTRNDQAFQRGTFRVRGEVIDIFPAESDDIALRVELFDEEVERLSLFDPLTGQVESTVPRYTIYPKTHYVTPRERILQAMEEIKDELADRRKVLLANNKLLEEQRLSQRTQFDLEMMNELGYCSGIENYSRFLSGRGPGEPPPTLFDYLPADGLLVVDESHVTIPQIGGMYRGDRARKETLVEYGFRLPSAMDNRPLKFEEFEALAPQTIYVSATPGNYELEKSGDEVVDQVVRPTGLLDPIIEVRPVATQVDDLLSEIRQRAAINERVLVTTLTKRMAEDLTEYLEEHGERVRYLHSDIDTVERMEIIRDLRLGEFDVLVGINLLREGLDMPEVSLVAILDADKEGFLRSERSLIQTIGRAARNVNGKAILYGDKITPSMAKAIGETERRREKQQKYNEEHGITPQGLNKKVVDILALGQNIAKTKAKGKGKGRSTAKAGIVELDMTPKALQQKIHELEGQMMQHAQNLEFEEAAQIRDQLHQLRELFIAAS.

The region spanning 26–183 is the Helicase ATP-binding domain; sequence EGLEDGLAHQ…RRLAELQYTR (158 aa). 39-46 contacts ATP; it reads GVTGSGKT. The Beta-hairpin motif lies at 92-115; the sequence is YYDYYQPEAYVPSSDTFIEKDASV. One can recognise a Helicase C-terminal domain in the interval 431–597; sequence QVDDLLSEIR…GLNKKVVDIL (167 aa). The UVR domain maps to 633-668; that stretch reads QQKIHELEGQMMQHAQNLEFEEAAQIRDQLHQLREL.

Belongs to the UvrB family. As to quaternary structure, forms a heterotetramer with UvrA during the search for lesions. Interacts with UvrC in an incision complex.

Its subcellular location is the cytoplasm. Functionally, the UvrABC repair system catalyzes the recognition and processing of DNA lesions. A damage recognition complex composed of 2 UvrA and 2 UvrB subunits scans DNA for abnormalities. Upon binding of the UvrA(2)B(2) complex to a putative damaged site, the DNA wraps around one UvrB monomer. DNA wrap is dependent on ATP binding by UvrB and probably causes local melting of the DNA helix, facilitating insertion of UvrB beta-hairpin between the DNA strands. Then UvrB probes one DNA strand for the presence of a lesion. If a lesion is found the UvrA subunits dissociate and the UvrB-DNA preincision complex is formed. This complex is subsequently bound by UvrC and the second UvrB is released. If no lesion is found, the DNA wraps around the other UvrB subunit that will check the other stand for damage. This Salmonella heidelberg (strain SL476) protein is UvrABC system protein B.